The chain runs to 351 residues: MKKTAIAIAVALAGFATVAQAAPKDNTWYTGAKLGWSQYHDTGFIDNNGPTHENQLGAGAFGGYQVNPYVGFEMGYDWLGRMPYKGSVENGAYKAQGVQLTAKLGYPITDDLDIYTRLGGMVWRADTKAHNNVTGESEKNHDTGVSPVFAGGVEWAITPEIATRLEYQWTNNIGDANTIGTRPDNGLLSLGVSYRFGQGEAAPVVAPAPAPAPEVQTKHFTLKSDVLFNFNKATLKPEGQAALDQLYSQLSNLDPKDGSVVVLGYTDRIGSDAYNQGLSERRAQSVVDYLISKGIPADKISARGMGESNPVTGNTCDNVKQRAALIDCLAPDRRVEIEVKGIKDVVTQPQA.

An N-terminal signal peptide occupies residues 1 to 21; that stretch reads MKKTAIAIAVALAGFATVAQA. Transmembrane regions (beta stranded) follow at residues 27-37, 55-66, 70-78, 96-107, 112-120, 147-156, 161-168, and 187-195; these read TWYTGAKLGWS, QLGAGAFGGYQV, VGFEMGYDW, QGVQLTAKLGYP, LDIYTRLGG, PVFAGGVEWA, IATRLEYQ, and LLSLGVSYR. Tandem repeats lie at residues 206-207, 208-209, 210-211, and 212-213. Positions 206–213 are 4 X 2 AA tandem repeats of A-P; that stretch reads APAPAPAP. Residues 215-343 form the OmpA-like domain; the sequence is VQTKHFTLKS…RVEIEVKGIK (129 aa). A disulfide bond links C316 and C328.

This sequence belongs to the outer membrane OOP (TC 1.B.6) superfamily. OmpA family. In terms of assembly, monomer and homodimer.

It is found in the cell outer membrane. In terms of biological role, with TolR probably plays a role in maintaining the position of the peptidoglycan cell wall in the periplasm. Acts as a porin with low permeability that allows slow penetration of small solutes; an internal gate slows down solute passage. Required for conjugation with F-type plasmids; probably serves as the mating receptor on recipient cells. This Escherichia fergusonii (strain ATCC 35469 / DSM 13698 / CCUG 18766 / IAM 14443 / JCM 21226 / LMG 7866 / NBRC 102419 / NCTC 12128 / CDC 0568-73) protein is Outer membrane protein A.